We begin with the raw amino-acid sequence, 546 residues long: Probable protein kinase UbiB (546 aa).

The region spanning 124–502 is the Protein kinase domain; that stretch reads DFDIQPLASA…HVRQSQSRYL (379 aa). ATP-binding positions include 130 to 138 and Lys-153; that span reads LASASIAQV. The Proton acceptor role is filled by Asp-288. 2 helical membrane passes run 501 to 521 and 522 to 542; these read YLLG…VNRP and EWGL…LVGW.

The protein belongs to the ABC1 family. UbiB subfamily.

It localises to the cell inner membrane. It functions in the pathway cofactor biosynthesis; ubiquinone biosynthesis [regulation]. Its function is as follows. Is probably a protein kinase regulator of UbiI activity which is involved in aerobic coenzyme Q (ubiquinone) biosynthesis. In Salmonella agona (strain SL483), this protein is Probable protein kinase UbiB.